Consider the following 566-residue polypeptide: Peroxisomal targeting signal receptor (566 aa).

Residue C5 forms a Glycyl cysteine thioester (Cys-Gly) (interchain with G-Cter in ubiquitin) linkage. The segment at 6–28 (SVGSNPLAQLNKHAQQNPALRQV) is amphipathic helix 1 (AH1). Residue K17 forms a Glycyl lysine isopeptide (Lys-Gly) (interchain with G-Cter in ubiquitin) linkage. The segment at 53–71 (RFQMDQFMNRSPGFSDGQL) is amphipathic helix 2 (AH2). A disordered region spans residues 88 to 159 (GLKKQDSGSS…IGRPMMHTGI (72 aa)). Residues 94–142 (SGSSNMSAGDTAQHSRSWGNEFNSRSPQQGLASRVNNVERISNTNSMSS) show a composition bias toward polar residues. The WxxxF/Y motif 1 signature appears at 111 to 115 (WGNEF). The tract at residues 145–151 (PGMSRIG) is amphipathic helix 3 (AH3). Positions 187-191 (WNEQF) match the WxxxF/Y motif 2 motif. Positions 225-241 (FQEVWDKLQAETADNNL) are amphipathic helix 4 (AH4). The WxxxF/Y motif 3 signature appears at 248 to 252 (WEKDY). TPR repeat units lie at residues 277 to 311 (NPNA…DPAH), 312 to 345 (VDAW…DPTN), 416 to 449 (PEVQ…NPND), 451 to 483 (LMWN…KPSF), and 485 to 517 (RARY…HEVE).

This sequence belongs to the peroxisomal targeting signal receptor family. In terms of assembly, interacts (via WxxxF/Y and LVxEF motifs) with PEX14; promoting translocation through the PEX13-PEX14 docking complex. In terms of processing, monoubiquitinated at Cys-5 by PEX2 during PEX5 passage through the retrotranslocation channel: monoubiquitination acts as a signal for PEX5 extraction and is required for proper export from peroxisomes and recycling. When PEX5 recycling is compromised, polyubiquitinated at Lys-17 by PEX10 during its passage through the retrotranslocation channel, leading to its degradation.

It localises to the cytoplasm. It is found in the cytosol. The protein resides in the peroxisome matrix. Its function is as follows. Receptor that mediates peroxisomal import of proteins containing a C-terminal PTS1-type tripeptide peroxisomal targeting signal (SKL-type). Binds to cargo proteins containing a PTS1 peroxisomal targeting signal in the cytosol, and translocates them into the peroxisome matrix by passing through the PEX13-PEX14 docking complex along with cargo proteins. PEX5 receptor is then retrotranslocated into the cytosol, leading to release of bound cargo in the peroxisome matrix, and reset for a subsequent peroxisome import cycle. This chain is Peroxisomal targeting signal receptor (PEX5), found in Kluyveromyces lactis (strain ATCC 8585 / CBS 2359 / DSM 70799 / NBRC 1267 / NRRL Y-1140 / WM37) (Yeast).